A 437-amino-acid chain; its full sequence is Glutamate-1-semialdehyde 2,1-aminomutase (437 aa).

At K273 the chain carries N6-(pyridoxal phosphate)lysine.

This sequence belongs to the class-III pyridoxal-phosphate-dependent aminotransferase family. HemL subfamily. Homodimer. Pyridoxal 5'-phosphate is required as a cofactor.

Its subcellular location is the cytoplasm. It catalyses the reaction (S)-4-amino-5-oxopentanoate = 5-aminolevulinate. It functions in the pathway porphyrin-containing compound metabolism; protoporphyrin-IX biosynthesis; 5-aminolevulinate from L-glutamyl-tRNA(Glu): step 2/2. In Chlamydia felis (strain Fe/C-56) (Chlamydophila felis), this protein is Glutamate-1-semialdehyde 2,1-aminomutase.